A 202-amino-acid chain; its full sequence is Large ribosomal subunit protein bL17 (202 aa).

The span at alanine 130 to glutamate 142 shows a compositional bias: low complexity. The interval alanine 130–alanine 202 is disordered. Composition is skewed to acidic residues over residues alanine 143–proline 168 and glutamine 177–alanine 202.

Belongs to the bacterial ribosomal protein bL17 family. In terms of assembly, part of the 50S ribosomal subunit. Contacts protein L32.

In Nocardioides sp. (strain ATCC BAA-499 / JS614), this protein is Large ribosomal subunit protein bL17.